Reading from the N-terminus, the 640-residue chain is 1,4-alpha-glucan branching enzyme GlgB (640 aa).

Asp-318 functions as the Nucleophile in the catalytic mechanism. Glu-371 (proton donor) is an active-site residue.

This sequence belongs to the glycosyl hydrolase 13 family. GlgB subfamily. As to quaternary structure, monomer.

It catalyses the reaction Transfers a segment of a (1-&gt;4)-alpha-D-glucan chain to a primary hydroxy group in a similar glucan chain.. It participates in glycan biosynthesis; glycogen biosynthesis. In terms of biological role, catalyzes the formation of the alpha-1,6-glucosidic linkages in glycogen by scission of a 1,4-alpha-linked oligosaccharide from growing alpha-1,4-glucan chains and the subsequent attachment of the oligosaccharide to the alpha-1,6 position. The sequence is that of 1,4-alpha-glucan branching enzyme GlgB from Francisella tularensis subsp. holarctica (strain LVS).